Here is a 278-residue protein sequence, read N- to C-terminus: 4-hydroxy-tetrahydrodipicolinate reductase (278 aa).

Residues 13 to 18 (GAAGKM) and 111 to 113 (GTT) each bind NAD(+). Residue histidine 167 is the Proton donor/acceptor of the active site. Residue histidine 168 coordinates (S)-2,3,4,5-tetrahydrodipicolinate. Lysine 171 functions as the Proton donor in the catalytic mechanism. 177–178 (GT) provides a ligand contact to (S)-2,3,4,5-tetrahydrodipicolinate.

The protein belongs to the DapB family.

It localises to the cytoplasm. The catalysed reaction is (S)-2,3,4,5-tetrahydrodipicolinate + NAD(+) + H2O = (2S,4S)-4-hydroxy-2,3,4,5-tetrahydrodipicolinate + NADH + H(+). It catalyses the reaction (S)-2,3,4,5-tetrahydrodipicolinate + NADP(+) + H2O = (2S,4S)-4-hydroxy-2,3,4,5-tetrahydrodipicolinate + NADPH + H(+). It functions in the pathway amino-acid biosynthesis; L-lysine biosynthesis via DAP pathway; (S)-tetrahydrodipicolinate from L-aspartate: step 4/4. Its function is as follows. Catalyzes the conversion of 4-hydroxy-tetrahydrodipicolinate (HTPA) to tetrahydrodipicolinate. The sequence is that of 4-hydroxy-tetrahydrodipicolinate reductase from Mastigocladus laminosus (Fischerella sp.).